A 275-amino-acid chain; its full sequence is 2,3,4,5-tetrahydropyridine-2,6-dicarboxylate N-succinyltransferase (275 aa).

Residues arginine 106 and aspartate 143 each coordinate substrate.

It belongs to the transferase hexapeptide repeat family. As to quaternary structure, homotrimer.

The protein resides in the cytoplasm. The enzyme catalyses (S)-2,3,4,5-tetrahydrodipicolinate + succinyl-CoA + H2O = (S)-2-succinylamino-6-oxoheptanedioate + CoA. The protein operates within amino-acid biosynthesis; L-lysine biosynthesis via DAP pathway; LL-2,6-diaminopimelate from (S)-tetrahydrodipicolinate (succinylase route): step 1/3. The chain is 2,3,4,5-tetrahydropyridine-2,6-dicarboxylate N-succinyltransferase from Cupriavidus pinatubonensis (strain JMP 134 / LMG 1197) (Cupriavidus necator (strain JMP 134)).